The primary structure comprises 192 residues: Imidazole glycerol phosphate synthase subunit HisH (192 aa).

A Glutamine amidotransferase type-1 domain is found at 1-192 (MIAIIDYGLG…QALKGGFIND (192 aa)). Catalysis depends on Cys77, which acts as the Nucleophile. Catalysis depends on residues His169 and Glu171.

Heterodimer of HisH and HisF.

It is found in the cytoplasm. It carries out the reaction 5-[(5-phospho-1-deoxy-D-ribulos-1-ylimino)methylamino]-1-(5-phospho-beta-D-ribosyl)imidazole-4-carboxamide + L-glutamine = D-erythro-1-(imidazol-4-yl)glycerol 3-phosphate + 5-amino-1-(5-phospho-beta-D-ribosyl)imidazole-4-carboxamide + L-glutamate + H(+). The enzyme catalyses L-glutamine + H2O = L-glutamate + NH4(+). Its pathway is amino-acid biosynthesis; L-histidine biosynthesis; L-histidine from 5-phospho-alpha-D-ribose 1-diphosphate: step 5/9. In terms of biological role, IGPS catalyzes the conversion of PRFAR and glutamine to IGP, AICAR and glutamate. The HisH subunit catalyzes the hydrolysis of glutamine to glutamate and ammonia as part of the synthesis of IGP and AICAR. The resulting ammonia molecule is channeled to the active site of HisF. In Staphylococcus epidermidis (strain ATCC 35984 / DSM 28319 / BCRC 17069 / CCUG 31568 / BM 3577 / RP62A), this protein is Imidazole glycerol phosphate synthase subunit HisH.